The chain runs to 122 residues: Large ribosomal subunit protein uL14 (122 aa).

It belongs to the universal ribosomal protein uL14 family. In terms of assembly, part of the 50S ribosomal subunit. Forms a cluster with proteins L3 and L19. In the 70S ribosome, L14 and L19 interact and together make contacts with the 16S rRNA in bridges B5 and B8.

Its function is as follows. Binds to 23S rRNA. Forms part of two intersubunit bridges in the 70S ribosome. This is Large ribosomal subunit protein uL14 from Flavobacterium johnsoniae (strain ATCC 17061 / DSM 2064 / JCM 8514 / BCRC 14874 / CCUG 350202 / NBRC 14942 / NCIMB 11054 / UW101) (Cytophaga johnsonae).